The primary structure comprises 128 residues: MSKPKRERSLPDNEAKAIARMLRVSPQKLNLVAQLIRGRKASAALADLQFSRKRIAVDVKKCLESAIANAENNHDLDVDALIVSEAHVGKGIVMKRFAPRGRGRSGRIFKPFAQLTIVVRQVEAEASA.

This sequence belongs to the universal ribosomal protein uL22 family. In terms of assembly, part of the 50S ribosomal subunit.

Functionally, this protein binds specifically to 23S rRNA; its binding is stimulated by other ribosomal proteins, e.g. L4, L17, and L20. It is important during the early stages of 50S assembly. It makes multiple contacts with different domains of the 23S rRNA in the assembled 50S subunit and ribosome. In terms of biological role, the globular domain of the protein is located near the polypeptide exit tunnel on the outside of the subunit, while an extended beta-hairpin is found that lines the wall of the exit tunnel in the center of the 70S ribosome. The polypeptide is Large ribosomal subunit protein uL22 (Rhodopseudomonas palustris (strain BisB18)).